An 89-amino-acid polypeptide reads, in one-letter code: uncharacterized protein (89 aa).

This is an uncharacterized protein from Bacillus subtilis (strain 168).